Here is a 419-residue protein sequence, read N- to C-terminus: Acyl-coenzyme A thioesterase 6 (419 aa).

Catalysis depends on charge relay system residues Ser232, Asp324, and His358. Positions 417-419 match the Peroxisome targeting signal motif; the sequence is SKL.

This sequence belongs to the C/M/P thioester hydrolase family. Highly expressed in white adipose tissue. Detected at lower levels in kidney, liver, brown adipose tissue and brain.

The protein localises to the peroxisome. The enzyme catalyses pristanoyl-CoA + H2O = 2,6,10,14-tetramethylpentadecanoate + CoA + H(+). The catalysed reaction is phytanoyl-CoA + H2O = 3,7,11,15-tetramethylhexadecanoate + CoA + H(+). It participates in lipid metabolism; fatty acid metabolism. In terms of biological role, catalyzes the hydrolysis of acyl-CoAs into free fatty acids and coenzyme A (CoASH), regulating their respective intracellular levels. Catalyzes the hydrolysis of phytanoyl-CoA and pristanoyl-CoA, two methyl-branched fatty acids derived from phytol, that enter the body via the diet. The sequence is that of Acyl-coenzyme A thioesterase 6 from Mus musculus (Mouse).